Reading from the N-terminus, the 510-residue chain is NAD(P)H-quinone oxidoreductase subunit 2 A, chloroplastic (510 aa).

Helical transmembrane passes span 24 to 44, 57 to 77, 99 to 119, 124 to 144, 149 to 169, 183 to 203, 227 to 247, 295 to 315, 323 to 343, 354 to 374, 395 to 415, 418 to 438, and 484 to 504; these read LLLF…GLIL, IPWL…ALLF, IFQF…VEYI, MAIT…MFLC, LITI…LSGY, YLLM…WLYG, PGIS…LSPA, WHLL…LIAI, MLAY…IVGD, YMLF…LFGL, ALSL…AGFF, LYLF…IGLL, and MIVC…IIAI.

This sequence belongs to the complex I subunit 2 family. As to quaternary structure, NDH is composed of at least 16 different subunits, 5 of which are encoded in the nucleus.

Its subcellular location is the plastid. It is found in the chloroplast thylakoid membrane. The enzyme catalyses a plastoquinone + NADH + (n+1) H(+)(in) = a plastoquinol + NAD(+) + n H(+)(out). It carries out the reaction a plastoquinone + NADPH + (n+1) H(+)(in) = a plastoquinol + NADP(+) + n H(+)(out). Its function is as follows. NDH shuttles electrons from NAD(P)H:plastoquinone, via FMN and iron-sulfur (Fe-S) centers, to quinones in the photosynthetic chain and possibly in a chloroplast respiratory chain. The immediate electron acceptor for the enzyme in this species is believed to be plastoquinone. Couples the redox reaction to proton translocation, and thus conserves the redox energy in a proton gradient. The polypeptide is NAD(P)H-quinone oxidoreductase subunit 2 A, chloroplastic (Panax ginseng (Korean ginseng)).